The following is a 93-amino-acid chain: YcgL domain-containing protein Shal_1837 (93 aa).

The region spanning 1 to 85 is the YcgL domain; that stretch reads MICAVYKSRR…PVVNLLEQHK (85 aa).

In Shewanella halifaxensis (strain HAW-EB4), this protein is YcgL domain-containing protein Shal_1837.